Consider the following 167-residue polypeptide: Signal peptidase complex catalytic subunit SEC11 (167 aa).

Residues 1–12 lie on the Cytoplasmic side of the membrane; it reads MNLRLELTRFLK. Residues 13–30 traverse the membrane as a helical; Signal-anchor for type II membrane protein segment; the sequence is LCFVLSSAFMFWKGLSIA. At 31-167 the chain is on the lumenal side; the sequence is TNSHSPIVVV…LGISALLSNE (137 aa). Catalysis depends on charge relay system residues Ser-44, His-83, and Asp-109. Positions 153–164 are C-terminal short (CTS) helix; that stretch reads ALMGFLGISALL.

Belongs to the peptidase S26B family. As to quaternary structure, component of the signal peptidase complex (SPC) composed of a catalytic subunit SEC11 and three accessory subunits SPC1, SPC2 and SPC3. The complex induces a local thinning of the ER membrane which is used to measure the length of the signal peptide (SP) h-region of protein substrates. This ensures the selectivity of the complex towards h-regions shorter than 18-20 amino acids. SPC associates with the translocon complex.

It is found in the endoplasmic reticulum membrane. The catalysed reaction is Cleavage of hydrophobic, N-terminal signal or leader sequences from secreted and periplasmic proteins.. Its function is as follows. Catalytic component of the signal peptidase complex (SPC) which catalyzes the cleavage of N-terminal signal sequences from nascent proteins as they are translocated into the lumen of the endoplasmic reticulum. Specifically cleaves N-terminal signal peptides that contain a hydrophobic alpha-helix (h-region) shorter than 18-20 amino acids. This Zygosaccharomyces rouxii (strain ATCC 2623 / CBS 732 / NBRC 1130 / NCYC 568 / NRRL Y-229) protein is Signal peptidase complex catalytic subunit SEC11 (SEC11).